Consider the following 134-residue polypeptide: Nif-regulating protein A (134 aa).

The C4-type; atypical zinc finger occupies 3–36 (CLECGLVYIVSGLKVPEKISVRVFVNRIEHPFTH).

As to quaternary structure, interacts with the general archaeal transcription factors TBPs.

Its function is as follows. Involved in nitrogen regulation. Enhances the transcription of the nitrogen fixation (nif) operon under nitrogen-limited conditions. Acts by binding to the nifH promoter region. The protein is Nif-regulating protein A of Methanosarcina mazei (strain ATCC BAA-159 / DSM 3647 / Goe1 / Go1 / JCM 11833 / OCM 88) (Methanosarcina frisia).